Here is a 473-residue protein sequence, read N- to C-terminus: Ribulose bisphosphate carboxylase large chain (473 aa).

Residues asparagine 116 and threonine 166 each coordinate substrate. The active-site Proton acceptor is lysine 168. Lysine 170 contacts substrate. 3 residues coordinate Mg(2+): lysine 194, aspartate 196, and glutamate 197. N6-carboxylysine is present on lysine 194. Histidine 287 serves as the catalytic Proton acceptor. Arginine 288, histidine 320, and serine 372 together coordinate substrate.

The protein belongs to the RuBisCO large chain family. Type I subfamily. Heterohexadecamer of 8 large chains and 8 small chains. Mg(2+) serves as cofactor.

It carries out the reaction 2 (2R)-3-phosphoglycerate + 2 H(+) = D-ribulose 1,5-bisphosphate + CO2 + H2O. The enzyme catalyses D-ribulose 1,5-bisphosphate + O2 = 2-phosphoglycolate + (2R)-3-phosphoglycerate + 2 H(+). Its function is as follows. RuBisCO catalyzes two reactions: the carboxylation of D-ribulose 1,5-bisphosphate, the primary event in carbon dioxide fixation, as well as the oxidative fragmentation of the pentose substrate. Both reactions occur simultaneously and in competition at the same active site. The sequence is that of Ribulose bisphosphate carboxylase large chain from Nitrosomonas eutropha (strain DSM 101675 / C91 / Nm57).